A 332-amino-acid chain; its full sequence is MPGPLRVLITGAAGQIAYNLSNMVANGNLFGKDQQIILHLLDIPEAKTVLDGVVMELQDCAFTVLAGIVPTHCLKEAFTDIDVALMVGAMPRKQGMERRDLLSSNVKIFKEQGEALDKYAKKTVKVLVVGNPANTNCLIMSKYAPSIPKENFTALTRLDHNRAIYQVAAKAGVPNTCVKNVCIWGNHSNKQFPDLSHAVVTKDGKQHPAKELINDEKWVKEVFIPCVQNRGAAVIGLRKLSRAASAAKAIVDQMRDWWFGTKEGEWVSMSVYSTGDHYGAPKDIYFSFPVTIKDGHYKVVDGLSMDEWSRSLFNLSADELVDEREVALASFK.

11 to 17 is a binding site for NAD(+); that stretch reads GAAGQIA. Substrate is bound by residues R92 and R98. Residues N105, Q112, and 129-131 each bind NAD(+); that span reads VGN. Positions 131 and 162 each coordinate substrate. The Proton acceptor role is filled by H187.

It belongs to the LDH/MDH superfamily. MDH type 2 family. As to quaternary structure, homodimer.

It is found in the cytoplasm. The catalysed reaction is (S)-malate + NAD(+) = oxaloacetate + NADH + H(+). The protein is Malate dehydrogenase, cytoplasmic (MDH) of Echinococcus granulosus (Hydatid tapeworm).